The primary structure comprises 254 residues: MVIANSNIIFVAGLGGIGLDTSREIVKSGPKNLVVLDRVDNPAAIAELKALNPKVTVTFYPYDVTVPVAETKKLLKTIFDKLKTVDLLINGAGILDDNQIERTIAVNFTGTVNTTTAIMDFWDKRKGGPGGVIANICSVTGFNSIYQVPVYSASKAAALSFTTSLAKLAHITGVTAYSINPGITKTVLVHKFNSWLSVEPRVAELLLEHPTQTTLQCAQNFVKAIEANQNGAIWKLDLGRLDAIEWTKHWDSGI.

10–33 (FVAGLGGIGLDTSREIVKSGPKNL) serves as a coordination point for NAD(+). Ser-138 lines the substrate pocket. The active-site Proton acceptor is the Tyr-151.

It belongs to the short-chain dehydrogenases/reductases (SDR) family. Homodimer.

It carries out the reaction a primary alcohol + NAD(+) = an aldehyde + NADH + H(+). The catalysed reaction is a secondary alcohol + NAD(+) = a ketone + NADH + H(+). The polypeptide is Alcohol dehydrogenase (Adh) (Drosophila planitibia (Fruit fly)).